Consider the following 117-residue polypeptide: Large ribosomal subunit protein bL20c (117 aa).

This sequence belongs to the bacterial ribosomal protein bL20 family.

It is found in the plastid. It localises to the chloroplast. In terms of biological role, binds directly to 23S ribosomal RNA and is necessary for the in vitro assembly process of the 50S ribosomal subunit. It is not involved in the protein synthesizing functions of that subunit. The sequence is that of Large ribosomal subunit protein bL20c from Carica papaya (Papaya).